The primary structure comprises 504 residues: Aromatic and large neutral amino acid transporter 5-3 (504 aa).

Residues 1–24 (MESTEATMVERKAESPSSGDRARS) form a disordered region. Over residues 8-24 (MVERKAESPSSGDRARS) the composition is skewed to basic and acidic residues. Transmembrane regions (helical) follow at residues 76–96 (YVVL…FMNW), 138–158 (HLFT…GIML), 165–185 (FGAL…GFSS), 206–226 (FFPC…IIAV), 233–253 (ISFI…GATF), and 256–276 (VMLG…LFII). The N-linked (GlcNAc...) asparagine glycan is linked to Asn-310. A run of 6 helical transmembrane segments spans residues 324–344 (LSFL…LFFA), 356–376 (EANQ…GGIA), 381–401 (IVPV…LMLI), 406–426 (CFAA…SFLV), 436–456 (IFYP…GGII), and 475–495 (MTVL…FMYV).

The protein belongs to the SLC43A transporter (TC 2.A.1.44) family.

The protein localises to the cell membrane. It carries out the reaction L-tyrosine(in) = L-tyrosine(out). With respect to regulation, L-tyrosine uptake is stimulated in trans by aromatic and large neutral amino acids, but not smaller or charged amino acids. Its function is as follows. L-tyrosine transporter that is essential for parasite survival and virulence. May also act as an aromatic and large neutral amino acid transporter. Does not cotransport other charged ions. Involved in amino acid homeostasis by facilitating the net uptake of L-tyrosine and maintaining intracellular pools of aromatic and large neutral amino acids through exchange. The sequence is that of Aromatic and large neutral amino acid transporter 5-3 from Toxoplasma gondii.